A 775-amino-acid chain; its full sequence is Kojibiose phosphorylase (775 aa).

Position 361-362 (361-362 (WD)) interacts with substrate. Catalysis depends on Glu-501, which acts as the Proton donor. 614-615 (KQ) contacts substrate.

This sequence belongs to the glycosyl hydrolase 65 family. In terms of assembly, homohexamer.

The catalysed reaction is kojibiose + phosphate = beta-D-glucose 1-phosphate + D-glucose. With respect to regulation, inhibited by Hg(2+) and Pb(2+). Its function is as follows. Catalyzes the reversible phosphorolysis of kojibiose into beta-D-glucose 1-phosphate (Glc1P) and D-glucose. Can act with alpha-1,2-oligoglucans, such as selaginose, but more slowly. Inactive when disaccharides with linkages other than alpha-1,2 linkages, such as sophorose, trehalose, neotrehalose, nigerose, laminaribiose, maltose, cellobiose, isomaltose, gentiobiose, sucrose and lactose, are used as substrates. In contrast, shows broad specificity for the reverse reaction. Various monosaccharides and disaccharides having a glucosyl residue at the non-reducing end are effective acceptors. This chain is Kojibiose phosphorylase, found in Thermoanaerobacter brockii (Thermoanaerobium brockii).